The sequence spans 113 residues: Putative pterin-4-alpha-carbinolamine dehydratase (113 aa).

It belongs to the pterin-4-alpha-carbinolamine dehydratase family.

The enzyme catalyses (4aS,6R)-4a-hydroxy-L-erythro-5,6,7,8-tetrahydrobiopterin = (6R)-L-erythro-6,7-dihydrobiopterin + H2O. The polypeptide is Putative pterin-4-alpha-carbinolamine dehydratase (Saccharophagus degradans (strain 2-40 / ATCC 43961 / DSM 17024)).